A 155-amino-acid chain; its full sequence is Alanine- and arginine-rich domain-containing protein (155 aa).

In Homo sapiens (Human), this protein is Alanine- and arginine-rich domain-containing protein (AARD).